The chain runs to 269 residues: Putative pyruvate, phosphate dikinase regulatory protein (269 aa).

151–158 (GVSRSSKT) contributes to the ADP binding site.

The protein belongs to the pyruvate, phosphate/water dikinase regulatory protein family. PDRP subfamily.

It catalyses the reaction N(tele)-phospho-L-histidyl/L-threonyl-[pyruvate, phosphate dikinase] + ADP = N(tele)-phospho-L-histidyl/O-phospho-L-threonyl-[pyruvate, phosphate dikinase] + AMP + H(+). The catalysed reaction is N(tele)-phospho-L-histidyl/O-phospho-L-threonyl-[pyruvate, phosphate dikinase] + phosphate + H(+) = N(tele)-phospho-L-histidyl/L-threonyl-[pyruvate, phosphate dikinase] + diphosphate. Its function is as follows. Bifunctional serine/threonine kinase and phosphorylase involved in the regulation of the pyruvate, phosphate dikinase (PPDK) by catalyzing its phosphorylation/dephosphorylation. This chain is Putative pyruvate, phosphate dikinase regulatory protein, found in Geobacter sulfurreducens (strain ATCC 51573 / DSM 12127 / PCA).